The chain runs to 435 residues: Tol-Pal system protein TolB (435 aa).

The N-terminal stretch at 1-20 is a signal peptide; it reads MRKIIAGVFIFVFLISNLYA.

The protein belongs to the TolB family. The Tol-Pal system is composed of five core proteins: the inner membrane proteins TolA, TolQ and TolR, the periplasmic protein TolB and the outer membrane protein Pal. They form a network linking the inner and outer membranes and the peptidoglycan layer.

The protein resides in the periplasm. Its function is as follows. Part of the Tol-Pal system, which plays a role in outer membrane invagination during cell division and is important for maintaining outer membrane integrity. This chain is Tol-Pal system protein TolB, found in Francisella tularensis subsp. tularensis (strain WY96-3418).